The sequence spans 296 residues: N-acetylmuramic acid 6-phosphate etherase 2 (296 aa).

The SIS domain occupies 55 to 218 (IIKSFNQGGR…STISMIGIGK (164 aa)). E83 functions as the Proton donor in the catalytic mechanism. E114 is an active-site residue.

It belongs to the GCKR-like family. MurNAc-6-P etherase subfamily. As to quaternary structure, homodimer.

The catalysed reaction is N-acetyl-D-muramate 6-phosphate + H2O = N-acetyl-D-glucosamine 6-phosphate + (R)-lactate. The protein operates within amino-sugar metabolism; N-acetylmuramate degradation. In terms of biological role, specifically catalyzes the cleavage of the D-lactyl ether substituent of MurNAc 6-phosphate, producing GlcNAc 6-phosphate and D-lactate. The protein is N-acetylmuramic acid 6-phosphate etherase 2 of Enterococcus faecalis (strain ATCC 700802 / V583).